A 290-amino-acid chain; its full sequence is MDTILVFSLMIASYDSNKNDLRKSSCQVEQWPSFFSEDVRSNKDLVVRVPLEIHTDTKGTPFIQNQPIATLRCLGSGRRVTVHLVYSERRPKVKYIMKNLPVITDLPRNSTASPRCHLRATSQFQNGSLLTAFLPGISQCTVYSAKDRSASSEMVPITTSSTTPRSKGDEATSTGAFPNPLTQGIDMSLKRRQKWSLVVKALIAVTLLLGGAAIIVFVIFEVPCPSQCLRVRQLCQCQWLWRRKRKEEDQKPGTTESQLDSQPEKVKHNVPNSSDSKKTTDIAIIYQTYF.

Positions 153 to 178 are disordered; the sequence is EMVPITTSSTTPRSKGDEATSTGAFP. The span at 157–178 shows a compositional bias: polar residues; sequence ITTSSTTPRSKGDEATSTGAFP. Residues 202-222 traverse the membrane as a helical segment; that stretch reads LIAVTLLLGGAAIIVFVIFEV. The tract at residues 246–276 is disordered; it reads KEEDQKPGTTESQLDSQPEKVKHNVPNSSDS. Positions 252-261 are enriched in polar residues; it reads PGTTESQLDS.

It localises to the membrane. This is an uncharacterized protein from Mus musculus (Mouse).